The primary structure comprises 229 residues: Probable transmembrane reductase CYB561D1 (229 aa).

Over 1–24 (MHSMEVGLVPAPAREPRLTRWLRR) the chain is Cytoplasmic. A Cytochrome b561 domain is found at 22–224 (LRRGSGILAH…HQISSSYLPR (203 aa)). The chain crosses the membrane as a helical span at residues 25–45 (GSGILAHLIALGFTIFLTVLS). The Lumenal segment spans residues 46-53 (RPGTSLFS). The chain crosses the membrane as a helical span at residues 54–74 (WHPVFMALAFCLCMAEAILLF). His-55 provides a ligand contact to heme b. Topologically, residues 75–91 (SPEHSLFFFCSRKTRIR) are cytoplasmic. Residues 92–112 (LHWAGQTMAILCAVLGLGFII) traverse the membrane as a helical segment. The heme b site is built by His-93 and His-127. At 113–128 (SSKIRSEMSHLVSWHS) the chain is on the lumenal side. Residues 129 to 149 (WIGALTLLATGGQALCGLCLL) form a helical membrane-spanning segment. Over 150–169 (CPRAARVSRVARLKLYHLTC) the chain is Cytoplasmic. His-166 is a binding site for heme b. A helical transmembrane segment spans residues 170–190 (GLVVYLMATVTVLLGMYSVWF). Over 191 to 193 (QAQ) the chain is Lumenal. Residues 194-214 (IKGTAWYLCLGLPLYPALVIM) form a helical membrane-spanning segment. At 215–229 (HQISSSYLPRKKVEI) the chain is on the cytoplasmic side.

Requires heme b as cofactor.

It is found in the membrane. It catalyses the reaction monodehydro-L-ascorbate radical(out) + L-ascorbate(in) = monodehydro-L-ascorbate radical(in) + L-ascorbate(out). The enzyme catalyses Fe(3+)(out) + L-ascorbate(in) = monodehydro-L-ascorbate radical(in) + Fe(2+)(out) + H(+). Probable transmembrane reductase that may use ascorbate as an electron donor and transfer electrons across membranes to reduce monodehydro-L-ascorbate radical and iron cations Fe(3+) in another cellular compartment. The sequence is that of Probable transmembrane reductase CYB561D1 from Mus musculus (Mouse).